The chain runs to 674 residues: Protein phosphatase 1 regulatory subunit 15A (674 aa).

The Cytoplasmic portion of the chain corresponds to 1-21 (MAPGQAPHQATPWRDAHPFFL). Residues 1–60 (MAPGQAPHQATPWRDAHPFFLLSPVMGLLSRAWSRLRGLGPLEPWLVEAVKGAALVEAGL) form a required for localization in the endoplasmic reticulum region. The segment at residues 22 to 39 (LSPVMGLLSRAWSRLRGL) is an intramembrane region (helical). The Cytoplasmic segment spans residues 40–674 (GPLEPWLVEA…AALDLSGRRG (635 aa)). Positions 65-504 (RTPLAIPHTP…AAEDWGEAEP (440 aa)) are disordered. Ser-143 is subject to Phosphoserine. A compositionally biased stretch (acidic residues) spans 162 to 172 (KAEEEGVAEEE). Polar residues predominate over residues 206–221 (TSTSALSPGSKPSTWV). The span at 232-241 (TEDKRTERSK) shows a compositional bias: basic and acidic residues. Positions 246–256 (TSVSPRSSGSD) are enriched in polar residues. A compositionally biased stretch (basic and acidic residues) spans 258–281 (RSWEYRSGEASEEKEEKAHKETGK). Tyr-262 carries the phosphotyrosine modification. The span at 282-298 (GEAAPGPQSSAPAQRPQ) shows a compositional bias: low complexity. 4 tandem repeats follow at residues 337–369 (AFLK…SDEE), 384–417 (VFLK…REAE), 427–460 (AFLK…SEAA), and 477–510 (AHFR…FRVA). The 4 X 34 AA approximate repeats stretch occupies residues 337–510 (AFLKAWVYWP…EAEPCPFRVA (174 aa)). Positions 337–510 (AFLKAWVYWP…EAEPCPFRVA (174 aa)) are interaction with SMAD7. Over residues 348–373 (EDTEEEEDEEEDEDSDSGSDEEEGEA) the composition is skewed to acidic residues. The residue at position 391 (Tyr-391) is a Phosphotyrosine. A compositionally biased stretch (acidic residues) spans 395–415 (EDTEEEEDEDSDTGSAEDERE). A compositionally biased stretch (low complexity) spans 418–427 (TSASTPPASA). Tyr-434 carries the phosphotyrosine modification. Positions 439-458 (DTEEEEDEDVDSEDKEDDSE) are enriched in acidic residues. The span at 466-477 (SDPHPSHPDQRA) shows a compositional bias: basic and acidic residues. Residues 483 to 555 (GYRPGKETEE…DPETPLKARK (73 aa)) form an interaction with KMT2A/MLL1 region. A compositionally biased stretch (acidic residues) spans 490-501 (TEEEEAAEDWGE). Tyr-512 is modified (phosphotyrosine). Disordered regions lie at residues 534–554 (RLKR…LKAR) and 625–674 (APIP…GRRG). The interval 536–583 (KRPETPTHDPDPETPLKARKVRFSEKVTVHFLAVWAGPAQAARQGPWE) is interaction with SMARCB1. The segment covering 537-554 (RPETPTHDPDPETPLKAR) has biased composition (basic and acidic residues). The span at 630–666 (LTQTLPSSSVPSSPVQTTPLSQAVATPSRSSAAAAAA) shows a compositional bias: low complexity.

It belongs to the PPP1R15 family. In terms of assembly, interacts with PPP1CA. Interacts with EIF2S1. Interacts with PCNA. Interacts with LYN and KMT2A/MLL1. Interacts with PPP1R1A and SMARCB1. Interacts with SMAD7. Interacts with BAG1. Interacts with NOX4. As to quaternary structure, (Microbial infection) Interacts with enterovirus 71/EV71 non-structural protein precursor 3CD; this interaction promotes EV71 replication. Post-translationally, phosphorylated at multiple Ser/Thr residues. Phosphorylated on tyrosine by LYN; which impairs its antiproliferative activity. Phosphorylation at Tyr-262 enhances proteasomal degradation, this position is dephosphorylated by PTPN2. In terms of processing, polyubiquitinated. Exhibits a rapid proteasomal degradation with a half-life under 1 hour, ubiquitination depends on endoplasmic reticulum association.

It is found in the endoplasmic reticulum membrane. The protein localises to the mitochondrion outer membrane. Functionally, recruits the serine/threonine-protein phosphatase PPP1CA to prevents excessive phosphorylation of the translation initiation factor eIF-2A/EIF2S1, thereby reversing the shut-off of protein synthesis initiated by stress-inducible kinases and facilitating recovery of cells from stress. Down-regulates the TGF-beta signaling pathway by promoting dephosphorylation of TGFB1 by PP1. May promote apoptosis by inducing p53/TP53 phosphorylation on 'Ser-15'. Plays an essential role in autophagy by tuning translation during starvation, thus enabling lysosomal biogenesis and a sustained autophagic flux. Also acts a viral restriction factor by attenuating HIV-1 replication. Mechanistically, mediates the inhibition of HIV-1 TAR RNA-mediated translation. Its function is as follows. (Microbial infection) Promotes enterovirus 71 replication by mediating the internal ribosome entry site (IRES) activity of viral 5'-UTR. The chain is Protein phosphatase 1 regulatory subunit 15A (PPP1R15A) from Homo sapiens (Human).